We begin with the raw amino-acid sequence, 486 residues long: Betaine aldehyde dehydrogenase (486 aa).

K(+) contacts are provided by T23 and D90. 147-149 (GAW) is a binding site for NAD(+). K159 serves as the catalytic Charge relay system. NAD(+)-binding positions include 173 to 176 (KPSE) and 226 to 229 (ESGT). K(+) is bound at residue L241. E247 (proton acceptor) is an active-site residue. 3 residues coordinate NAD(+): G249, C281, and E382. C281 (nucleophile) is an active-site residue. A Cysteine sulfenic acid (-SOH) modification is found at C281. K(+)-binding residues include K452 and G455. Catalysis depends on E459, which acts as the Charge relay system.

Belongs to the aldehyde dehydrogenase family. As to quaternary structure, dimer of dimers. Requires K(+) as cofactor.

The enzyme catalyses betaine aldehyde + NAD(+) + H2O = glycine betaine + NADH + 2 H(+). It participates in amine and polyamine biosynthesis; betaine biosynthesis via choline pathway; betaine from betaine aldehyde: step 1/1. Functionally, involved in the biosynthesis of the osmoprotectant glycine betaine. Catalyzes the irreversible oxidation of betaine aldehyde to the corresponding acid. The polypeptide is Betaine aldehyde dehydrogenase (Vibrio parahaemolyticus serotype O3:K6 (strain RIMD 2210633)).